The primary structure comprises 326 residues: HTH-type transcriptional regulator BlaA (326 aa).

Residues 1–59 form the HTH lysR-type domain; that stretch reads MDVVNACRAFVKVSERGSFTVGAAAAQMSQSVASRRVAALEKHFGERLFDRASRRPSLT. Positions 19-38 form a DNA-binding region, H-T-H motif; that stretch reads FTVGAAAAQMSQSVASRRVA. The disordered stretch occupies residues 289–326; that stretch reads TADHGPDPATGAGPGADAGTEPGARAEPGAPEEGAQAC. Low complexity predominate over residues 295–326; it reads DPATGAGPGADAGTEPGARAEPGAPEEGAQAC.

This sequence belongs to the LysR transcriptional regulatory family.

In terms of biological role, positive regulator of the expression of the gene (blaB) for beta-lactamase. It binds to the blaL-blaA intercistronic region. In Streptomyces cacaoi, this protein is HTH-type transcriptional regulator BlaA (blaA).